The sequence spans 68 residues: MSAAEDTRSKTDDQLKDSLLELKKEQFNLRFQAASGQLENTARVRTVRREIARIKSVRGERNRAPQAK.

It belongs to the universal ribosomal protein uL29 family.

The chain is Large ribosomal subunit protein uL29 from Rhodospirillum rubrum (strain ATCC 11170 / ATH 1.1.1 / DSM 467 / LMG 4362 / NCIMB 8255 / S1).